The primary structure comprises 333 residues: tRNA N6-adenosine threonylcarbamoyltransferase (333 aa).

Fe cation is bound by residues His-111 and His-115. Substrate contacts are provided by residues 134-138, Asp-167, Gly-180, Asp-184, and Asn-269; that span reads VVSGG. Asp-297 provides a ligand contact to Fe cation.

The protein belongs to the KAE1 / TsaD family. Requires Fe(2+) as cofactor.

Its subcellular location is the cytoplasm. The catalysed reaction is L-threonylcarbamoyladenylate + adenosine(37) in tRNA = N(6)-L-threonylcarbamoyladenosine(37) in tRNA + AMP + H(+). Its function is as follows. Required for the formation of a threonylcarbamoyl group on adenosine at position 37 (t(6)A37) in tRNAs that read codons beginning with adenine. Is involved in the transfer of the threonylcarbamoyl moiety of threonylcarbamoyl-AMP (TC-AMP) to the N6 group of A37, together with TsaE and TsaB. TsaD likely plays a direct catalytic role in this reaction. This is tRNA N6-adenosine threonylcarbamoyltransferase from Carboxydothermus hydrogenoformans (strain ATCC BAA-161 / DSM 6008 / Z-2901).